Here is a 668-residue protein sequence, read N- to C-terminus: tRNA 5-methylaminomethyl-2-thiouridine biosynthesis bifunctional protein MnmC (668 aa).

The tract at residues 1 to 245 is tRNA (mnm(5)s(2)U34)-methyltransferase; that stretch reads MKHYSIQPAN…KREMLCGVME (245 aa). The FAD-dependent cmnm(5)s(2)U34 oxidoreductase stretch occupies residues 270–668; the sequence is IGGGIASALL…LLKGKAVKAG (399 aa).

In the N-terminal section; belongs to the methyltransferase superfamily. tRNA (mnm(5)s(2)U34)-methyltransferase family. It in the C-terminal section; belongs to the DAO family. It depends on FAD as a cofactor.

It localises to the cytoplasm. The catalysed reaction is 5-aminomethyl-2-thiouridine(34) in tRNA + S-adenosyl-L-methionine = 5-methylaminomethyl-2-thiouridine(34) in tRNA + S-adenosyl-L-homocysteine + H(+). Its function is as follows. Catalyzes the last two steps in the biosynthesis of 5-methylaminomethyl-2-thiouridine (mnm(5)s(2)U) at the wobble position (U34) in tRNA. Catalyzes the FAD-dependent demodification of cmnm(5)s(2)U34 to nm(5)s(2)U34, followed by the transfer of a methyl group from S-adenosyl-L-methionine to nm(5)s(2)U34, to form mnm(5)s(2)U34. This chain is tRNA 5-methylaminomethyl-2-thiouridine biosynthesis bifunctional protein MnmC, found in Escherichia coli O9:H4 (strain HS).